Consider the following 376-residue polypeptide: MTATAQRQLPLDTPSASTLAQQAELHPELNRAHVRFINLGKTYHGKQGPVEALGNIDLAVQRGEIFGIIGRSGAGKSSLIRTINRLEQPSSGRVLIDQVDIGEFDEDKLVELRRRIGMIFQHFNLMSAKTVWQNVELPLKVAGVPREQRARKVAQLLELVGLQDKHNAYPAQLSGGQKQRVGIARALVHDPAILLCDEATSALDPETTQSILGLLREINQRLGLTIVLITHEMAVIRDICHRVVVLEQGRIVEQGPVWQVFGDPQHDVSKTLLAPLQTGLPKEWAERLSDQPQRPDAALLLDVHFTGASDQGPDLAALFAALGGKVQLLQGGVERIQERAIGHLILSVAGSVHTRDELLARARQLAPRAEVLGYVG.

The ABC transporter domain occupies 34-273 (VRFINLGKTY…PQHDVSKTLL (240 aa)). 70–77 (GRSGAGKS) is a binding site for ATP.

The protein belongs to the ABC transporter superfamily. Methionine importer (TC 3.A.1.24) family. As to quaternary structure, the complex is composed of two ATP-binding proteins (MetN), two transmembrane proteins (MetI) and a solute-binding protein (MetQ).

It localises to the cell inner membrane. The enzyme catalyses L-methionine(out) + ATP + H2O = L-methionine(in) + ADP + phosphate + H(+). It carries out the reaction D-methionine(out) + ATP + H2O = D-methionine(in) + ADP + phosphate + H(+). Its function is as follows. Part of the ABC transporter complex MetNIQ involved in methionine import. Responsible for energy coupling to the transport system. This is Methionine import ATP-binding protein MetN 2 from Pseudomonas savastanoi pv. phaseolicola (strain 1448A / Race 6) (Pseudomonas syringae pv. phaseolicola (strain 1448A / Race 6)).